The primary structure comprises 334 residues: Replication factor C subunit 4 (334 aa).

ATP is bound at residue 55 to 62 (GPPGTGKT).

This sequence belongs to the activator 1 small subunits family. As to quaternary structure, heteropentamer of various rfc subunits that forms a complex (RFC) with PCNA in the presence of ATP.

The protein localises to the nucleus. Its function is as follows. The elongation of primed DNA templates by DNA polymerase delta and epsilon requires the action of the accessory proteins PCNA and activator 1. This subunit may be involved in the elongation of the multiprimed DNA template. In Caenorhabditis elegans, this protein is Replication factor C subunit 4 (rfc-4).